Here is a 139-residue protein sequence, read N- to C-terminus: Large ribosomal subunit protein uL16 (139 aa).

This sequence belongs to the universal ribosomal protein uL16 family. In terms of assembly, part of the 50S ribosomal subunit.

In terms of biological role, binds 23S rRNA and is also seen to make contacts with the A and possibly P site tRNAs. The chain is Large ribosomal subunit protein uL16 from Treponema denticola (strain ATCC 35405 / DSM 14222 / CIP 103919 / JCM 8153 / KCTC 15104).